We begin with the raw amino-acid sequence, 146 residues long: 3-hydroxyacyl-[acyl-carrier-protein] dehydratase FabZ (146 aa).

The active site involves histidine 48.

Belongs to the thioester dehydratase family. FabZ subfamily.

The protein localises to the cytoplasm. The catalysed reaction is a (3R)-hydroxyacyl-[ACP] = a (2E)-enoyl-[ACP] + H2O. Functionally, involved in unsaturated fatty acids biosynthesis. Catalyzes the dehydration of short chain beta-hydroxyacyl-ACPs and long chain saturated and unsaturated beta-hydroxyacyl-ACPs. This is 3-hydroxyacyl-[acyl-carrier-protein] dehydratase FabZ from Teredinibacter turnerae (strain ATCC 39867 / T7901).